We begin with the raw amino-acid sequence, 296 residues long: Polyadenylate-binding protein 2 (296 aa).

The segment at 1–102 is disordered; that stretch reads MAAVSSAASL…EEEPGELTGD (102 aa). Gly residues-rich tracts occupy residues 19 to 31 and 71 to 82; these read LRGG…GGQD and GRGGSGGGGAGG. The span at 84 to 97 shows a compositional bias: acidic residues; that stretch reads EELEDEELEEEEPG. Positions 107–141 form a coiled coil; sequence DPELEAIKARVREMEEEAEKLKELQNEVEKQMNMS. A necessary for homooligomerization region spans residues 146–296; that stretch reads NAGPVIMSIE…ARVTSWYTPY (151 aa). The RRM domain occupies 163 to 240; the sequence is RSIYVGNVDY…RQIKVVPKRT (78 aa).

In terms of assembly, monomer and homooligomer. Binds RNA as a monomer and oligomerizes when bound to poly(A).

It localises to the nucleus. The protein resides in the cytoplasm. Involved in the 3'-end formation of mRNA precursors (pre-mRNA) by the addition of a poly(A) tail of 200-250 nt to the upstream cleavage product. Stimulates poly(A) polymerase (PAPOLA) conferring processivity on the poly(A) tail elongation reaction and also controls the poly(A) tail length. Increases the affinity of poly(A) polymerase for RNA. Binds to poly(A) and to poly(G) with high affinity. May protect the poly(A) tail from degradation. In Xenopus tropicalis (Western clawed frog), this protein is Polyadenylate-binding protein 2.